The chain runs to 326 residues: UDP-N-acetylglucosamine transporter (326 aa).

A run of 8 helical transmembrane segments spans residues 4–24, 38–58, 136–156, 174–194, 212–232, 243–263, 269–289, and 293–313; these read NLKYLSLGILVFQTTSLVLTM, LSSTAVVVAEFLKIMACIFLV, LGVYQWLSLVILMAGVAFVQW, FVGLMAVLTACFSSGFAGVYF, LGFFGSIFGLMGVYVYDGELV, QLTWIVVALQALGGLVIAAVI, ILKGFATSLSIILSTIISYFW, and FVPTSVFFLGAILVIAATFLY.

The protein belongs to the nucleotide-sugar transporter family. SLC35A subfamily. As to quaternary structure, interacts with SLC35A2; the interaction is reduced in the presence of SLC35A4. Found in a complex with SLC35A2 and SLC35A4. Interacts with MGAT4B. O-Glcnacylation regulates the stability of SLC35A3 and the specific complex formation with MGAT4B.

The protein resides in the golgi apparatus membrane. The catalysed reaction is UMP(out) + UDP-N-acetyl-alpha-D-glucosamine(in) = UMP(in) + UDP-N-acetyl-alpha-D-glucosamine(out). In terms of biological role, transports diphosphate-N-acetylglucosamine (UDP-GlcNAc) from the cytosol into the lumen of the Golgi apparatus, functioning as an antiporter that exchanges UDP-N-acetyl-alpha-D-glucosamine for UMP. May supply UDP-GlcNAc as substrate for Golgi-resident glycosyltransferases that generate highly branched, multiantennary complex N-glycans and keratan sulfate. However, the exact role of SLC35A3 still needs to be elucidated, it could be a member of a catalytically more efficient multiprotein complex rather than function independently as a single transporter. This is UDP-N-acetylglucosamine transporter (Slc35a3) from Mus musculus (Mouse).